A 1390-amino-acid polypeptide reads, in one-letter code: DNA-directed RNA polymerase III subunit RPC1 (1390 aa).

Positions 69, 72, 79, 82, 109, and 112 each coordinate Zn(2+). Position 144 (Lys-144) interacts with DNA. Cys-156 and Cys-159 together coordinate Zn(2+). Residues Lys-167, Ser-326, Lys-348, Arg-353, Arg-360, and Arg-366 each coordinate DNA. N6-acetyllysine is present on Lys-445. Position 464 (Arg-464) interacts with RNA. The Mg(2+) site is built by Asp-499, Asp-501, and Asp-503. RNA is bound at residue Asp-503. Residues 844–856 (PTEFFFHTMAGRE) are bridging helix. Residues Arg-1159, Arg-1305, and Lys-1323 each coordinate DNA.

The protein belongs to the RNA polymerase beta' chain family. Component of the RNA polymerase III (Pol III) complex consisting of 17 subunits: a ten-subunit catalytic core composed of POLR3A/RPC1, POLR3B/RPC2, POLR1C/RPAC1, POLR1D/RPAC2, POLR3K/RPC10, POLR2E/RPABC1, POLR2F/RPABC2, POLR2H/RPABC3, POLR2K/RPABC4 and POLR2L/RPABC5; a mobile stalk composed of two subunits POLR3H/RPC8 and CRCP/RPC9, protruding from the core and functioning primarily in transcription initiation; and additional subunits homologous to general transcription factors of the RNA polymerase II machinery, POLR3C/RPC3-POLR3F/RPC6-POLR3G/RPC7 heterotrimer required for transcription initiation and POLR3D/RPC4-POLR3E/RPC5 heterodimer involved in both transcription initiation and termination. As part of the RNA polymerase III complex, interacts with PKP2. Requires Mg(2+) as cofactor.

It localises to the nucleus. The protein resides in the cytoplasm. The protein localises to the cytosol. It catalyses the reaction RNA(n) + a ribonucleoside 5'-triphosphate = RNA(n+1) + diphosphate. In terms of biological role, catalytic core component of RNA polymerase III (Pol III), a DNA-dependent RNA polymerase which synthesizes small non-coding RNAs using the four ribonucleoside triphosphates as substrates. Synthesizes 5S rRNA, snRNAs, tRNAs and miRNAs from at least 500 distinct genomic loci. Pol III-mediated transcription cycle proceeds through transcription initiation, transcription elongation and transcription termination stages. During transcription initiation, Pol III is recruited to DNA promoters type I, II or III with the help of general transcription factors and other specific initiation factors. Once the polymerase has escaped from the promoter it enters the elongation phase during which RNA is actively polymerized, based on complementarity with the template DNA strand. Transcription termination involves the release of the RNA transcript and polymerase from the DNA. Forms Pol III active center together with the second largest subunit POLR3B/RPC2. Appends one nucleotide at a time to the 3' end of the nascent RNA, with POLR3A/RPC1 contributing a Mg(2+)-coordinating DxDGD motif, and POLR3B/RPC2 participating in the coordination of a second Mg(2+) ion and providing lysine residues believed to facilitate Watson-Crick base pairing between the incoming nucleotide and template base. Typically, Mg(2+) ions direct a 5' nucleoside triphosphate to form a phosphodiester bond with the 3' hydroxyl of the preceding nucleotide of the nascent RNA, with the elimination of pyrophosphate. Pol III plays a key role in sensing and limiting infection by intracellular bacteria and DNA viruses. Acts as a nuclear and cytosolic DNA sensor involved in innate immune response. Can sense non-self dsDNA that serves as template for transcription into dsRNA. The non-self RNA polymerase III transcripts, such as Epstein-Barr virus-encoded RNAs (EBERs) induce type I interferon and NF-kappa-B through the RIG-I pathway. The polypeptide is DNA-directed RNA polymerase III subunit RPC1 (Bos taurus (Bovine)).